The following is a 278-amino-acid chain: tRNA pseudouridine synthase A (278 aa).

The active-site Nucleophile is the aspartate 51. Tyrosine 109 is a binding site for substrate.

It belongs to the tRNA pseudouridine synthase TruA family. Homodimer.

It carries out the reaction uridine(38/39/40) in tRNA = pseudouridine(38/39/40) in tRNA. Functionally, formation of pseudouridine at positions 38, 39 and 40 in the anticodon stem and loop of transfer RNAs. This is tRNA pseudouridine synthase A from Paracidovorax citrulli (strain AAC00-1) (Acidovorax citrulli).